The chain runs to 403 residues: MTKQKGTILKLKNNLAIIMTSDCKIVSIKRQPGMYEGLEISFNKNEIINKKNKLAFYSRIAAGIAAIFIIMVISFNLFNNNDVYAYVAIDSDASIEFELDKNNKIVKVNYYNDNTNTVLDELDLKNKPVDFAIKEVIKKLDLNESVILISACLKEQNTKKSSASDNYESEKLSKLIDICKNAVEVNVSENVESKVVEVSYDYKKLAEKNKLSLGRSIVYEKAKEQGIALNIEDIKNKSIGETLQKVKIDDVGVVHNVKKEEPKKPMPEKPEPGKPEPQKPEPGKPDPAKPEPGKPGPEKPEPEKPEPAKPEPAKPEPQPQINDLPKDKTIPEEKTIPNSGVEPMAEPIVEPKDKQQEKPRPDSKLKLEEKPTVEPKDSLEEKPVTKPKDDKKEKAKNSIEKMP.

Topologically, residues 1–59 are cytoplasmic; sequence MTKQKGTILKLKNNLAIIMTSDCKIVSIKRQPGMYEGLEISFNKNEIINKKNKLAFYSR. The RsgI N-terminal anti-sigma domain maps to 4-51; that stretch reads QKGTILKLKNNLAIIMTSDCKIVSIKRQPGMYEGLEISFNKNEIINKK. The chain crosses the membrane as a helical span at residues 60-80; the sequence is IAAGIAAIFIIMVISFNLFNN. At 81–403 the chain is on the extracellular side; that stretch reads NDVYAYVAID…KAKNSIEKMP (323 aa). 3 stretches are compositionally biased toward basic and acidic residues: residues 254 to 314, 324 to 335, and 349 to 403; these read VHNV…EPAK, LPKDKTIPEEKT, and VEPK…EKMP. Residues 254–403 form a disordered region; the sequence is VHNVKKEEPK…KAKNSIEKMP (150 aa).

Interacts (via RsgI N-terminal anti-sigma domain) with SigI8.

It localises to the cell membrane. Anti-sigma factor for SigI8. Negatively regulates SigI8 activity through direct interaction. The protein is Anti-sigma-I factor RsgI8 of Acetivibrio thermocellus (strain ATCC 27405 / DSM 1237 / JCM 9322 / NBRC 103400 / NCIMB 10682 / NRRL B-4536 / VPI 7372) (Clostridium thermocellum).